A 156-amino-acid chain; its full sequence is S-ribosylhomocysteine lyase (156 aa).

The Fe cation site is built by His54, His58, and Cys123.

It belongs to the LuxS family. As to quaternary structure, homodimer. It depends on Fe cation as a cofactor.

It catalyses the reaction S-(5-deoxy-D-ribos-5-yl)-L-homocysteine = (S)-4,5-dihydroxypentane-2,3-dione + L-homocysteine. Involved in the synthesis of autoinducer 2 (AI-2) which is secreted by bacteria and is used to communicate both the cell density and the metabolic potential of the environment. The regulation of gene expression in response to changes in cell density is called quorum sensing. Catalyzes the transformation of S-ribosylhomocysteine (RHC) to homocysteine (HC) and 4,5-dihydroxy-2,3-pentadione (DPD). In Ligilactobacillus salivarius (strain UCC118) (Lactobacillus salivarius), this protein is S-ribosylhomocysteine lyase.